A 447-amino-acid polypeptide reads, in one-letter code: Dihydrolipoyllysine-residue acetyltransferase component of pyruvate dehydrogenase complex (447 aa).

One can recognise a Lipoyl-binding domain in the interval 2 to 78 (PINITMPALS…KVNALIAVLA (77 aa)). Lysine 43 carries the post-translational modification N6-lipoyllysine. The disordered stretch occupies residues 91 to 140 (GNGAAGAVPAPKPKETAETAPAAAPAPAAAPAPQAAAPASPAPADGEGKR). Low complexity predominate over residues 108-134 (ETAPAAAPAPAAAPAPQAAAPASPAPA). One can recognise a Peripheral subunit-binding (PSBD) domain in the interval 142–179 (FSSPLARRLAKEAGIDLSAIAGSGPHGRVVKKDVETAV). Histidine 420 is an active-site residue.

This sequence belongs to the 2-oxoacid dehydrogenase family. As to quaternary structure, forms a 24-polypeptide structural core with octahedral symmetry. (R)-lipoate serves as cofactor.

It catalyses the reaction N(6)-[(R)-dihydrolipoyl]-L-lysyl-[protein] + acetyl-CoA = N(6)-[(R)-S(8)-acetyldihydrolipoyl]-L-lysyl-[protein] + CoA. Its function is as follows. The pyruvate dehydrogenase complex catalyzes the overall conversion of pyruvate to acetyl-CoA and CO(2). It contains multiple copies of three enzymatic components: pyruvate dehydrogenase (E1), dihydrolipoamide acetyltransferase (E2) and lipoamide dehydrogenase (E3). This is Dihydrolipoyllysine-residue acetyltransferase component of pyruvate dehydrogenase complex (pdhC) from Rhizobium meliloti (strain 1021) (Ensifer meliloti).